We begin with the raw amino-acid sequence, 509 residues long: MGKKPVMLMILDGFGISKIDNGNAVKAAYKPNLDKYFKKYPHTELGASGLSVGLPEGQMGNSEVGHLNIGAGRIVYQALTRITKSINEGQFFKNEVLNSAVDNAVKNNSDLHLLGLVSPGGVHSHTNHLKGLLQLAKQKGASRVYIHAFTDGRDVPPSSAYMYIDDMEKYIQKIGIGKIATVSGRYYAMDRDKRWERVELAYNALVYGRGNKAASASEAVTNSYDNGKTDEFIVPTVIEEDNKPVTTIKNGDSVIFFNFRPDRARQLTRALNDNIFKGFKREKLDLKFVTMTEYDATLENVYVAFNNEVYKNTLGEYVSKMEKSQLRIAETEKYAHVTFFFNGGVEAPNRNEDRELIPSPKVATYDLKPEMSAREVTSTVLDRLDQDKYDMIILNFANPDMVGHTGIFQAAKKAIEVVDECLGRIVSKILEKNGTVFITADHGNSEQMVDYSTGNPMTAHTTNSVPFLYVSKNSTELRKDGILADISPTILQVMGLEKPKEMTGKSLIK.

Residues aspartate 12 and serine 62 each contribute to the Mn(2+) site. The active-site Phosphoserine intermediate is serine 62. Substrate contacts are provided by residues histidine 123, 153–154 (RD), arginine 185, arginine 191, 260–263 (RPDR), and lysine 333. Aspartate 400, histidine 404, aspartate 441, histidine 442, and histidine 460 together coordinate Mn(2+).

The protein belongs to the BPG-independent phosphoglycerate mutase family. As to quaternary structure, monomer. Mn(2+) is required as a cofactor.

It catalyses the reaction (2R)-2-phosphoglycerate = (2R)-3-phosphoglycerate. It participates in carbohydrate degradation; glycolysis; pyruvate from D-glyceraldehyde 3-phosphate: step 3/5. Its function is as follows. Catalyzes the interconversion of 2-phosphoglycerate and 3-phosphoglycerate. The sequence is that of 2,3-bisphosphoglycerate-independent phosphoglycerate mutase from Clostridium kluyveri (strain ATCC 8527 / DSM 555 / NBRC 12016 / NCIMB 10680 / K1).